Consider the following 887-residue polypeptide: Kinesin-like protein KIF20A (887 aa).

Serine 2 carries the N-acetylserine modification. Serine 7, serine 14, and serine 21 each carry phosphoserine. One can recognise a Kinesin motor domain in the interval 63-506 (KVKVYLRIRP…AKFSALASQL (444 aa)). 159-166 (GVTNSGKT) contacts ATP. Serine 527 carries the phosphoserine; by PLK1 modification. The segment at 527–553 (SPQVGPGLEKEDKADSDLEDSPEDEAD) is disordered. Over residues 543 to 553 (DLEDSPEDEAD) the composition is skewed to acidic residues. A coiled-coil region spans residues 559 to 804 (KEELLQVVEA…VLVKLDLQKK (246 aa)). A phosphoserine mark is found at serine 683 and serine 823. The tract at residues 805 to 887 (AACIAEQYHT…LLKSPFGKKY (83 aa)) is globular. The interval 826–875 (KRLGANQENQQPNHQPPGKKPFLRNLLPRTPTCQSSTDSSPYARILRSRH) is disordered. Position 855 is a phosphothreonine (threonine 855). A compositionally biased stretch (polar residues) spans 856–865 (PTCQSSTDSS). Phosphoserine occurs at positions 865, 876, and 881.

The protein belongs to the TRAFAC class myosin-kinesin ATPase superfamily. Kinesin family. Phosphorylated by PLK1 at Ser-527 during mitosis, creating a docking site for PLK1 and recruiting PLK1 at central spindle. As to expression, ubiquitously expressed, with highest levels in spleen and testis.

It is found in the golgi apparatus. The protein localises to the cytoplasm. Its subcellular location is the cytoskeleton. The protein resides in the spindle. Its function is as follows. Mitotic kinesin required for chromosome passenger complex (CPC)-mediated cytokinesis. Following phosphorylation by PLK1, involved in recruitment of PLK1 to the central spindle. Interacts with guanosine triphosphate (GTP)-bound forms of RAB6A and RAB6B. May act as a motor required for the retrograde RAB6 regulated transport of Golgi membranes and associated vesicles along microtubules. Has a microtubule plus end-directed motility. The sequence is that of Kinesin-like protein KIF20A (Kif20a) from Mus musculus (Mouse).